The following is a 247-amino-acid chain: Cationic trypsin-3 (247 aa).

The first 15 residues, 1–15 (MKALIFLAFLGAAVA), serve as a signal peptide directing secretion. Positions 16–24 (LPLDDDDDK) are cleaved as a propeptide — activation peptide. Positions 25-245 (IVGGYTCQKN…YVNWIQQTVA (221 aa)) constitute a Peptidase S1 domain. 6 disulfides stabilise this stretch: C31-C161, C49-C65, C133-C234, C140-C207, C172-C186, and C197-C221. The active-site Charge relay system is the H64. Ca(2+)-binding residues include E76, N78, V81, and E86. D108 acts as the Charge relay system in catalysis. The active-site Charge relay system is the S201.

This sequence belongs to the peptidase S1 family. It depends on Ca(2+) as a cofactor.

The protein resides in the secreted. It is found in the extracellular space. It carries out the reaction Preferential cleavage: Arg-|-Xaa, Lys-|-Xaa.. The sequence is that of Cationic trypsin-3 (Try3) from Rattus norvegicus (Rat).